We begin with the raw amino-acid sequence, 595 residues long: NAD-dependent protein deacetylase hst4 (595 aa).

The disordered stretch occupies residues 1 to 106 (MAPRKTKPAT…HLDLTPRLGF (106 aa)). Residues 9-32 (ATKPAAKPTPASTATTSSCPSPKS) are compositionally biased toward low complexity. The Deacetylase sirtuin-type domain maps to 109–428 (YGDQEPQLNL…SADVERVKNE (320 aa)). NAD(+) contacts are provided by residues 134 to 153 (GAGI…DGLF) and 222 to 225 (QNID). His253 acts as the Proton acceptor in catalysis. 4 residues coordinate Zn(2+): Cys261, Cys264, Cys283, and Cys286. Residues 342-344 (GTS), 373-375 (NNE), and Cys394 contribute to the NAD(+) site. Polar residues predominate over residues 445–473 (QAQTGMLTPSSSYDGDVENASTTTLSNPA). Positions 445–595 (QAQTGMLTPS…IPKGMGKLLD (151 aa)) are disordered. Composition is skewed to basic and acidic residues over residues 478–492 (KLTE…DAPK) and 530–543 (TPEE…EHKA).

The protein belongs to the sirtuin family. Class I subfamily. Zn(2+) is required as a cofactor.

The protein resides in the nucleus. It catalyses the reaction N(6)-acetyl-L-lysyl-[protein] + NAD(+) + H2O = 2''-O-acetyl-ADP-D-ribose + nicotinamide + L-lysyl-[protein]. Functionally, NAD-dependent histone deacetylase, which could function in telomeric silencing, cell cycle progression and chromosome stability. The protein is NAD-dependent protein deacetylase hst4 of Emericella nidulans (strain FGSC A4 / ATCC 38163 / CBS 112.46 / NRRL 194 / M139) (Aspergillus nidulans).